Here is a 387-residue protein sequence, read N- to C-terminus: Aminodeoxyfutalosine synthase (387 aa).

Positions 52 to 279 constitute a Radical SAM core domain; that stretch reads VHFNVNRHLN…ARTQMATGAE (228 aa). [4Fe-4S] cluster is bound by residues Cys66, Cys70, and Cys73.

Belongs to the radical SAM superfamily. MqnE family. [4Fe-4S] cluster is required as a cofactor.

It catalyses the reaction 3-[(1-carboxyvinyl)-oxy]benzoate + S-adenosyl-L-methionine + H2O = 6-amino-6-deoxyfutalosine + hydrogencarbonate + L-methionine + H(+). The protein operates within quinol/quinone metabolism; menaquinone biosynthesis. In terms of biological role, radical SAM enzyme that catalyzes the addition of the adenosyl radical to the double bond of 3-[(1-carboxyvinyl)oxy]benzoate, leading to aminodeoxyfutalosine (AFL), a key intermediate in the formation of menaquinone (MK, vitamin K2) from chorismate. This chain is Aminodeoxyfutalosine synthase, found in Streptomyces coelicolor (strain ATCC BAA-471 / A3(2) / M145).